The following is a 770-amino-acid chain: Glutamate carboxypeptidase 2 homolog (770 aa).

Residues Met-1–Pro-19 lie on the Cytoplasmic side of the membrane. The chain crosses the membrane as a helical; Signal-anchor for type II membrane protein span at residues Met-20–Leu-40. The Extracellular portion of the chain corresponds to Gly-41–Ile-770. Residues Asn-175 and Asn-337 are each glycosylated (N-linked (GlcNAc...) asparagine). The catalytic stretch occupies residues Ser-282–Phe-597. Zn(2+)-binding residues include His-387 and Asp-397. N-linked (GlcNAc...) asparagine glycosylation occurs at Asn-417. Catalysis depends on Glu-435, which acts as the Nucleophile. Glu-436 and Asp-464 together coordinate Zn(2+). Residues Asn-469 and Asn-551 are each glycosylated (N-linked (GlcNAc...) asparagine). His-562 contacts Zn(2+). Residues Asn-606 and Asn-630 are each glycosylated (N-linked (GlcNAc...) asparagine).

It belongs to the peptidase M28 family. M28B subfamily. The cofactor is Zn(2+).

It is found in the membrane. The catalysed reaction is Release of an unsubstituted, C-terminal glutamyl residue, typically from Ac-Asp-Glu or folylpoly-gamma-glutamates.. The protein is Glutamate carboxypeptidase 2 homolog of Caenorhabditis briggsae.